The sequence spans 354 residues: 3-isopropylmalate dehydrogenase (354 aa).

76–87 is an NAD(+) binding site; the sequence is GPRWDGAKERPE. Positions 94, 104, 130, and 215 each coordinate substrate. Residues aspartate 215, aspartate 239, and aspartate 243 each contribute to the Mg(2+) site. 273–285 contacts NAD(+); it reads GSAPDIAGKNKAN.

The protein belongs to the isocitrate and isopropylmalate dehydrogenases family. LeuB type 1 subfamily. As to quaternary structure, homodimer. Mg(2+) serves as cofactor. Requires Mn(2+) as cofactor.

It localises to the cytoplasm. It catalyses the reaction (2R,3S)-3-isopropylmalate + NAD(+) = 4-methyl-2-oxopentanoate + CO2 + NADH. The protein operates within amino-acid biosynthesis; L-leucine biosynthesis; L-leucine from 3-methyl-2-oxobutanoate: step 3/4. Functionally, catalyzes the oxidation of 3-carboxy-2-hydroxy-4-methylpentanoate (3-isopropylmalate) to 3-carboxy-4-methyl-2-oxopentanoate. The product decarboxylates to 4-methyl-2 oxopentanoate. The sequence is that of 3-isopropylmalate dehydrogenase from Bacillus thuringiensis subsp. konkukian (strain 97-27).